We begin with the raw amino-acid sequence, 730 residues long: Jacalin-related lectin 5 (730 aa).

Residues 1-126 enclose the Jacalin-type lectin 1 domain; it reads MSWDDGKHTK…LNSIDAHFAP (126 aa). A disordered region spans residues 121–450; the sequence is DAHFAPAPPP…GNQWDDGTDH (330 aa). 4 stretches are compositionally biased toward low complexity: residues 138–153, 168–179, 196–207, and 248–261; these read GASG…GSAG, AGGSKPSSGSAG, and TEKN…SSGS. Residues 275–307 show a composition bias toward polar residues; that stretch reads ETVSNIGDTESNAGGSKSNDGANNGASGIESNA. Positions 314-323 are enriched in gly residues; sequence FGAGGTGGIG. The segment covering 343-358 has biased composition (low complexity); it reads DGASGIGSNDGSTGTN. Composition is skewed to polar residues over residues 366–375 and 388–416; these read DSNIEGTENN and IGNS…TGGK. Low complexity predominate over residues 417–429; the sequence is ESNTGSESNTNSS. Jacalin-type lectin domains follow at residues 430 to 572 and 584 to 727; these read PQKL…YFVP and PNKV…YFIP.

The protein belongs to the jacalin lectin family.

In Arabidopsis thaliana (Mouse-ear cress), this protein is Jacalin-related lectin 5 (JAL5).